The primary structure comprises 120 residues: Glycine cleavage system H protein (120 aa).

One can recognise a Lipoyl-binding domain in the interval 17–99 (VATVGITNYA…QGAGWFFKLK (83 aa)). Lys58 is modified (N6-lipoyllysine).

It belongs to the GcvH family. In terms of assembly, the glycine cleavage system is composed of four proteins: P, T, L and H. (R)-lipoate serves as cofactor.

In terms of biological role, the glycine cleavage system catalyzes the degradation of glycine. The H protein shuttles the methylamine group of glycine from the P protein to the T protein. This Rhizobium leguminosarum bv. trifolii (strain WSM2304) protein is Glycine cleavage system H protein.